A 425-amino-acid polypeptide reads, in one-letter code: L-lysine N6-monooxygenase (425 aa).

An FAD-binding site is contributed by 8-14; that stretch reads IGVGTGP.

It belongs to the lysine N(6)-hydroxylase/L-ornithine N(5)-oxygenase family. The cofactor is FAD.

The protein resides in the cytoplasm. Its subcellular location is the cell membrane. It carries out the reaction L-lysine + NADPH + O2 = N(6)-hydroxy-L-lysine + NADP(+) + H2O. Its pathway is siderophore biosynthesis; aerobactin biosynthesis. Its function is as follows. Flavoprotein monooxygenase required for N-hydroxylation of lysine. Involved in the biosynthesis of the siderophore aerobactin which is a chelator that mediates the high-affinity iron transport systems induced by the organism under iron-stressed conditions. This chain is L-lysine N6-monooxygenase, found in Escherichia coli.